Here is an 82-residue protein sequence, read N- to C-terminus: Consomatin Ro2 (82 aa).

The N-terminal stretch at 1–22 (MQTAYWLMVMMMVWITAPLYEG) is a signal peptide. A propeptide spanning residues 23–57 (GKPNDVIRGLVPDDLTPQFILRSLISRRRSDKDVR) is cleaved from the precursor. C62 and C68 are joined by a disulfide. A D-tryptophan modification is found at W64. P69 and P70 each carry 4-hydroxyproline. Residues 72–82 (LWRRHDRKGKD) constitute a propeptide that is removed on maturation.

Belongs to the conotoxin C superfamily. Consomatin family. In terms of tissue distribution, expressed by the venom duct.

The protein resides in the secreted. In terms of biological role, moderately activates human somatostatin receptors (SSTR) with a preferential activation of SSTR1 and SSTR4. In vivo, does not cause behavioral changes in mice within a few minutes of intracranial injection, but causes a progressive loss of movement thereafter. Four to five hours after injection, mice recover, even with the highest dose tested. Shows antinociception and antihyperalgesia activities in two mouse models of acute pain, most probably by acting outside the central nervous system. This chain is Consomatin Ro2, found in Conus rolani (Cone snail).